The following is a 624-amino-acid chain: Kelch-like protein diablo (624 aa).

A disordered region spans residues 1–55; that stretch reads MGDPLLPGSTGLGSGSATAATGGSVTAGSGLGNGGTGGAERPPSPARLTHTSEKH. Low complexity predominate over residues 15–28; the sequence is GSATAATGGSVTAG. The span at 29–38 shows a compositional bias: gly residues; the sequence is SGLGNGGTGG. The region spanning 73–140 is the BTB domain; the sequence is CDVVLNVGGR…CYTAHIIVEE (68 aa). Residues 175–277 form the BACK domain; sequence CLGIRAFADT…SPKFLVGTVG (103 aa). Kelch repeat units lie at residues 324-370, 372-418, 419-465, 467-512, 514-559, and 560-606; these read VLFA…VLND, LYAV…VLDG, FLYA…VLSG, LYAI…VFNN, IYAV…VVNG, and QLYA…VMRA.

Its pathway is protein modification; protein ubiquitination. Its function is as follows. Probable substrate-specific adapter of an E3 ubiquitin-protein ligase complex which mediates the ubiquitination and subsequent proteasomal degradation of target proteins. May have a role in synapse differentiation and growth. The protein is Kelch-like protein diablo of Drosophila grimshawi (Hawaiian fruit fly).